Reading from the N-terminus, the 446-residue chain is Histidine--tRNA ligase (446 aa).

It belongs to the class-II aminoacyl-tRNA synthetase family. Homodimer.

The protein localises to the cytoplasm. The enzyme catalyses tRNA(His) + L-histidine + ATP = L-histidyl-tRNA(His) + AMP + diphosphate + H(+). This Burkholderia pseudomallei (strain K96243) protein is Histidine--tRNA ligase.